Reading from the N-terminus, the 225-residue chain is Protein-L-isoaspartate O-methyltransferase (225 aa).

Ser75 is a catalytic residue.

It belongs to the methyltransferase superfamily. L-isoaspartyl/D-aspartyl protein methyltransferase family.

Its subcellular location is the cytoplasm. It catalyses the reaction [protein]-L-isoaspartate + S-adenosyl-L-methionine = [protein]-L-isoaspartate alpha-methyl ester + S-adenosyl-L-homocysteine. Functionally, catalyzes the methyl esterification of L-isoaspartyl residues in peptides and proteins that result from spontaneous decomposition of normal L-aspartyl and L-asparaginyl residues. It plays a role in the repair and/or degradation of damaged proteins. The polypeptide is Protein-L-isoaspartate O-methyltransferase (Stenotrophomonas maltophilia (strain R551-3)).